A 339-amino-acid chain; its full sequence is Phosphoribosylformylglycinamidine cyclo-ligase (339 aa).

This sequence belongs to the AIR synthase family.

It localises to the cytoplasm. It catalyses the reaction 2-formamido-N(1)-(5-O-phospho-beta-D-ribosyl)acetamidine + ATP = 5-amino-1-(5-phospho-beta-D-ribosyl)imidazole + ADP + phosphate + H(+). It participates in purine metabolism; IMP biosynthesis via de novo pathway; 5-amino-1-(5-phospho-D-ribosyl)imidazole from N(2)-formyl-N(1)-(5-phospho-D-ribosyl)glycinamide: step 2/2. In Fusobacterium nucleatum subsp. nucleatum (strain ATCC 25586 / DSM 15643 / BCRC 10681 / CIP 101130 / JCM 8532 / KCTC 2640 / LMG 13131 / VPI 4355), this protein is Phosphoribosylformylglycinamidine cyclo-ligase.